Here is a 790-residue protein sequence, read N- to C-terminus: Protein sel-1 homolog 1 (790 aa).

The first 21 residues, 1–21 (MQVRVRLSLLLLCAVLLGSAA), serve as a signal peptide directing secretion. Residues 22 to 51 (ATSDDKTNQDDSLDSKSSLPTDESVKDHTT) are disordered. Residues 22 to 734 (ATSDDKTNQD…LFTQLDMDQL (713 aa)) lie on the Lumenal side of the membrane. The interval 23-733 (TSDDKTNQDD…DLFTQLDMDQ (711 aa)) is interaction with ERLEC1, OS9 and SYVN1. The residue at position 64 (Ser-64) is a Phosphoserine. The span at 67–78 (AEVESLLQDEED) shows a compositional bias: acidic residues. The segment at 67–98 (AEVESLLQDEEDSSKTQEEEISFLESPNPSSK) is disordered. A Fibronectin type-II domain is found at 118-166 (AHGEPCHFPFLFLDKEYDECTSDGREDGRLWCATTYDYKTDEKWGFCET). 2 cysteine pairs are disulfide-bonded: Cys-123–Cys-149 and Cys-137–Cys-164. Sel1-like repeat units follow at residues 179–214 (AEMI…GMNH), 215–250 (TKAL…EEGS), 251–286 (PKGQ…LGGN), 287–322 (LIAH…NHVA), 369–405 (VQAQ…NAGN), 406–442 (SHAM…DMGN), 443–478 (PVGQ…EQGW), 479–514 (VDGQ…QGGH), and 515–550 (ILAF…ERGR). Residues Asn-191 and Asn-213 are each glycosylated (N-linked (GlcNAc...) asparagine). N-linked (GlcNAc...) asparagine glycosylation occurs at Asn-268. Residues 348–533 (NSGMLEEDLI…MHASGTGVMR (186 aa)) form an important for homodimerization and oligomerization region. Asn-427 carries N-linked (GlcNAc...) asparagine glycosylation. An N-linked (GlcNAc...) asparagine glycan is attached at Asn-604. 2 Sel1-like repeats span residues 623 to 658 (TVAR…EQQH) and 660 to 695 (AQAM…EASP). The interval 639 to 719 (TDVDYETAFI…VVYFLQYIRE (81 aa)) is interaction with SYVN1. The tract at residues 734-790 (LLGPEWDLYLMTIIALLLGTVIAYRQRQHQDIPVPRPPGPRPAPPQQEGPPEQQPPQ) is mediates retention in the endoplasmic reticulum. Residues 735–755 (LGPEWDLYLMTIIALLLGTVI) form a helical membrane-spanning segment. The Cytoplasmic segment spans residues 756–790 (AYRQRQHQDIPVPRPPGPRPAPPQQEGPPEQQPPQ). Residues 763 to 790 (QDIPVPRPPGPRPAPPQQEGPPEQQPPQ) are disordered. Positions 767–790 (VPRPPGPRPAPPQQEGPPEQQPPQ) are enriched in pro residues.

The protein belongs to the sel-1 family. As to quaternary structure, homodimer and homooligomer. May form a complex with ERLEC1, HSPA5, OS9, and SYVN1. Interacts with FOXRED2 and EDEM1. Interacts with LPL and LMF1; may stabilize the complex formed by LPL and LMF1 and thereby promote the export of LPL dimers. Component of the HRD1 complex, which comprises at least SYNV1/HRD1, DERL1/2, FAM8A1, HERPUD1/HERP, OS9, SEL1L and UBE2J1. SYNV1 assembles with SEL1L and FAM8A1 through its transmembrane domains, but interaction with its cytoplasmic domain is required to confer stability to FAM8A1 and enhance recruitment of HERPUD1. The interaction with SYNV1/HRD1 is direct. In terms of processing, N-glycosylated. In terms of tissue distribution, highly expressed in pancreas, white adipose tissue, liver and spleen (at protein level). Detected in heart, brain, spleen, lung, liver, kidney and testis.

Its subcellular location is the endoplasmic reticulum membrane. Functionally, plays a role in the endoplasmic reticulum quality control (ERQC) system also called ER-associated degradation (ERAD) involved in ubiquitin-dependent degradation of misfolded endoplasmic reticulum proteins. Enhances SYVN1 stability. Plays a role in LPL maturation and secretion. Required for normal differentiation of the pancreas epithelium, and for normal exocrine function and survival of pancreatic cells. May play a role in Notch signaling. This Mus musculus (Mouse) protein is Protein sel-1 homolog 1 (Sel1l).